The chain runs to 168 residues: Calcium-binding protein 2 (168 aa).

4 consecutive EF-hand domains span residues 13-48 (GMEK…AGKK), 48-83 (KNPE…MNDE), 88-123 (VLNW…QGAE), and 124-159 (DPEL…KKFS). Ca(2+) is bound by residues aspartate 26, aspartate 28, asparagine 30, lysine 32, glutamate 37, aspartate 61, aspartate 63, asparagine 65, glutamate 67, glutamate 72, aspartate 101, aspartate 103, aspartate 105, lysine 107, glutamate 112, aspartate 137, aspartate 139, aspartate 141, and glutamate 148.

Not known; probably binds four calcium ions. This Dictyostelium discoideum (Social amoeba) protein is Calcium-binding protein 2 (cbp2).